Here is a 1021-residue protein sequence, read N- to C-terminus: Solute carrier family 12 member 3 (1021 aa).

Residues 1 to 137 (MAELPTTETP…KNPEEPVRFG (137 aa)) lie on the Cytoplasmic side of the membrane. Position 43 is a phosphoserine (Ser-43). The residue at position 46 (Thr-46) is a Phosphothreonine; by OXSR1 and STK39. Ser-49 carries the phosphoserine modification. The residue at position 50 (Thr-50) is a Phosphothreonine. A phosphothreonine; by OXSR1 and STK39 mark is found at Thr-55 and Thr-60. Ser-73 is subject to Phosphoserine. Ser-91 carries the phosphoserine; by OXSR1 and STK39 modification. Thr-124 is modified (phosphothreonine). A Phosphoserine modification is found at Ser-126. The discontinuously helical transmembrane segment at 138 to 167 (WVKGVMIRCMLNIWGVILYLRLPWITAQAG) threads the bilayer. Position 148 (Leu-148) interacts with Na(+). Asn-149 serves as a coordination point for polythiazide. Position 151 (Trp-151) interacts with Na(+). Residues 168–189 (IVLTWIIILLSVTVTSITGLSI) form a helical membrane-spanning segment. Residues 190–220 (SAISTNGKVKSGGTYFLISRSLGPELGGSIG) lie on the Cytoplasmic side of the membrane. A helical membrane pass occupies residues 221–243 (LIFAFANAVGVAMHTVGFAETVR). Residues Asn-227 and His-234 each coordinate polythiazide. The Extracellular segment spans residues 244–255 (DLLQEYGAPIVD). 2 helical membrane-spanning segments follow: residues 256-280 (PINDIRIIAVVSVTVLLAISLAGME) and 281-303 (WESKAQVLFFLVIMVSFANYLVG). The Extracellular portion of the chain corresponds to 304-338 (TLIPPSEDKASKGFFSYRADIFVQNLVPDWRGPDG). A discontinuously helical transmembrane segment spans residues 339 to 360 (TFFGMFSIFFPSATGILAGANI). Thr-352 contributes to the polythiazide binding site. Positions 353, 354, and 355 each coordinate chloride. Asn-359 lines the polythiazide pocket. Residues 361–371 (SGDLKDPAIAI) lie on the Cytoplasmic side of the membrane. A helical transmembrane segment spans residues 372-393 (PKGTLMAIFWTTISYLAISATI). At 394-453 (GSCVVRDASGVLNDTVTPGWGACEGLACSYGWNFTECTQQHSCHYGLINYYQTMSMVSGF) the chain is on the extracellular side. Residue Asn-406 is glycosylated (N-linked (GlcNAc...) asparagine). Cysteines 416 and 421 form a disulfide. Asn-426 is a glycosylation site (N-linked (GlcNAc...) asparagine). The cysteines at positions 430 and 436 are disulfide-linked. A helical membrane pass occupies residues 454-477 (APLITAGIFGATLSSALACLVSAA). The Na(+) site is built by Ala-464, Ser-467, and Ser-468. The Cytoplasmic segment spans residues 478–507 (KVFQCLCEDQLYPLIGFFGKGYGKNKEPVR). A helical transmembrane segment spans residues 508-522 (GYLLAYAIAVAFIII). Over 523-527 (AELNT) the chain is Extracellular. The helical transmembrane segment at 528-544 (IAPIISNFFLCSYALIN) threads the bilayer. Tyr-540 lines the chloride pocket. Topologically, residues 545–567 (FSCFHASITNSPGWRPSFQYYNK) are cytoplasmic. 2 helical membrane passes run 568–587 (WAALFGAIISVVIMFLLTWW) and 588–599 (AALIAIGVVLFL). At 600–1021 (LLYVIYKKPE…QENVLTFYCQ (422 aa)) the chain is on the cytoplasmic side. The scissor helix stretch occupies residues 615-630 (SVQAGSYNLALSYSVG). Positions 648, 655, 677, 741, 780, and 781 each coordinate ATP.

Belongs to the SLC12A transporter family. Homodimer; adopts a domain-swap conformation at the scissor helices connecting the transmembrane domain and C-terminal domain. Interacts with KLHL3. Interacts with IL18R1; this interaction is increased by IL18 treatment. In terms of processing, ubiquitinated; ubiquitination is essential for regulation of endocytosis. The BCR(KLHL3) complex was initially identified as a candidate ubiquitin ligase for SLC12A3. However, it was later shown that it is not the case. Post-translationally, phosphorylated at Thr-46, Thr-55, Thr-60 and Ser-91 by OXSR1/OSR1 and STK39/SPAK downstream of WNK4, promoting its activity. Phosphorylated in response to IL18. Predominantly expressed in the kidney (at protein level). Localizes to the distal convoluted tubules (at protein level). Not detected in normal aorta, but abundantly expressed in fatty streaks and advanced atherosclerotic lesions (at protein level).

The protein resides in the cell membrane. The protein localises to the apical cell membrane. It catalyses the reaction chloride(out) + Na(+)(out) = chloride(in) + Na(+)(in). With respect to regulation, phosphorylation by OXSR1/OSR1 and STK39/SPAK in kidney distal convoluted tubules downstream of WNK4 promotes its activity. Also activated by OXSR1/OSR1 and STK39/SPAK downstream of WNK3. Target of thiazide diuretics used in the treatment of high blood pressure. Thiazide drugs, such as polythiazide, specifically inhibit SLC12A3/NCC transporter activity by competing with chloride for binding and by locking SLC12A3/NCC in an outward-facing conformation. Its function is as follows. Electroneutral sodium and chloride ion cotransporter, which acts as a key mediator of sodium and chloride reabsorption in kidney distal convoluted tubules. Also acts as a receptor for the pro-inflammatory cytokine IL18, thereby contributing to IL18-induced cytokine production, including IFNG, IL6, IL18 and CCL2. May act either independently of IL18R1, or in a complex with IL18R1. The polypeptide is Solute carrier family 12 member 3 (Homo sapiens (Human)).